A 91-amino-acid polypeptide reads, in one-letter code: Defensin-like protein 269 (91 aa).

The first 25 residues, 1–25 (MAVSKTTMLIVLVAIILSCVSISNA), serve as a signal peptide directing secretion. Cystine bridges form between Cys-41-Cys-82, Cys-53-Cys-72, Cys-59-Cys-77, and Cys-63-Cys-79.

This sequence belongs to the DEFL family.

It localises to the secreted. This is Defensin-like protein 269 from Arabidopsis thaliana (Mouse-ear cress).